The sequence spans 34 residues: Ribonuclease PL1 (34 aa).

An N-linked (GlcNAc...) asparagine; partial glycan is attached at N4. H15 acts as the Proton acceptor in catalysis.

This sequence belongs to the pancreatic ribonuclease family.

The protein resides in the lysosome. The catalysed reaction is an [RNA] containing cytidine + H2O = an [RNA]-3'-cytidine-3'-phosphate + a 5'-hydroxy-ribonucleotide-3'-[RNA].. It catalyses the reaction an [RNA] containing uridine + H2O = an [RNA]-3'-uridine-3'-phosphate + a 5'-hydroxy-ribonucleotide-3'-[RNA].. This Sus scrofa (Pig) protein is Ribonuclease PL1.